A 42-amino-acid chain; its full sequence is Photosystem II reaction center protein J (42 aa).

Residues 12 to 32 (LWFVGMIVGLAALGLLGIFFY) traverse the membrane as a helical segment.

Belongs to the PsbJ family. In terms of assembly, PSII is composed of 1 copy each of membrane proteins PsbA, PsbB, PsbC, PsbD, PsbE, PsbF, PsbH, PsbI, PsbJ, PsbK, PsbL, PsbM, PsbT, PsbX, PsbY, PsbZ, Psb30/Ycf12, at least 3 peripheral proteins of the oxygen-evolving complex and a large number of cofactors. It forms dimeric complexes.

It is found in the plastid. The protein localises to the chloroplast thylakoid membrane. Functionally, one of the components of the core complex of photosystem II (PSII). PSII is a light-driven water:plastoquinone oxidoreductase that uses light energy to abstract electrons from H(2)O, generating O(2) and a proton gradient subsequently used for ATP formation. It consists of a core antenna complex that captures photons, and an electron transfer chain that converts photonic excitation into a charge separation. The chain is Photosystem II reaction center protein J from Nephroselmis olivacea (Green alga).